The sequence spans 117 residues: Large ribosomal subunit protein bL20c (117 aa).

This sequence belongs to the bacterial ribosomal protein bL20 family.

The protein resides in the plastid. Its subcellular location is the chloroplast. In terms of biological role, binds directly to 23S ribosomal RNA and is necessary for the in vitro assembly process of the 50S ribosomal subunit. It is not involved in the protein synthesizing functions of that subunit. The sequence is that of Large ribosomal subunit protein bL20c from Arabis hirsuta (Hairy rock-cress).